Reading from the N-terminus, the 732-residue chain is MMSGVMTAVSNRWDPGAVRALAEARHGDAFAVLGAHPSDNGRFLRTYLPGADRVSAVLDDGQVVALDAGPEPGLFAGELPAHGGYRLRIGWPGGEQETADPYAFGPQLSDFDLHLISEGHHLQLADALGANVVEVDGVRGTRFAVWAPNASRVAVVGDFNSWDARRHPMRLRHQAGVWELFVPDVGPGAHYKYQLRGPHGHELPAKADPVARRAELAPGTASIVADPTPHQWSDDGWMATRARRQAHDAPMSIYEIHAGSWLREAGLDLDWDGLADRLIPYVADMGFTHVELMPVSEHPFGGSWGYQPLGLFAPTARFGTPDGFARFVDRCHREGIGVIVDWVPAHFPTDAHGLAHFDGTALYEHADPREGFHRDWNTLIYNHGRREVSGFLIASAMEFLQRYHVDGLRVDAVASMLYRDYSRNAGEWIPNIHGGRENYETIAFLRRLNEVVREHTPGAVMIAEESTAFPGVTADVAHGGLGFHYKWNMGWMHDTLHYAGLDPIYRRYHHGELTFSMVYAYSERFVLPISHDEVVHGKGSLLGRMPGDDWQRFANLRAYLGFMFTHPGRKLLFMGCEFGQPTEWNHDAGLPWHLLDDPRHRGVQTLVRDLNRLYVQYPALHAHDDDPSGFAWVVGDDAGNSVVAFLRKGKRGDAPVLVVINFTPVVQHGYRIGVPQGGQWREVFNSDAGIYGGSNLGNGGSVTAEQQSMHGHAQSLPLLLPPLGAIVLTPYG.

The Nucleophile role is filled by Asp-411. Glu-464 (proton donor) is an active-site residue.

This sequence belongs to the glycosyl hydrolase 13 family. GlgB subfamily. Monomer.

It catalyses the reaction Transfers a segment of a (1-&gt;4)-alpha-D-glucan chain to a primary hydroxy group in a similar glucan chain.. Its pathway is glycan biosynthesis; glycogen biosynthesis. Catalyzes the formation of the alpha-1,6-glucosidic linkages in glycogen by scission of a 1,4-alpha-linked oligosaccharide from growing alpha-1,4-glucan chains and the subsequent attachment of the oligosaccharide to the alpha-1,6 position. This is 1,4-alpha-glucan branching enzyme GlgB 1 from Xanthomonas euvesicatoria pv. vesicatoria (strain 85-10) (Xanthomonas campestris pv. vesicatoria).